The chain runs to 874 residues: Probable inorganic carbon transporter subunit DabA (874 aa).

Zn(2+) is bound by residues cysteine 398, aspartate 400, histidine 580, and cysteine 595.

This sequence belongs to the inorganic carbon transporter (TC 9.A.2) DabA family. As to quaternary structure, forms a complex with DabB. Requires Zn(2+) as cofactor.

Its subcellular location is the cell membrane. Functionally, part of an energy-coupled inorganic carbon pump. The polypeptide is Probable inorganic carbon transporter subunit DabA (Bacillus cereus (strain Q1)).